The chain runs to 286 residues: 4-diphosphocytidyl-2-C-methyl-D-erythritol kinase (286 aa).

The active site involves Lys-11. 94 to 104 contributes to the ATP binding site; the sequence is PMGGGIGGGSS. Asp-136 is an active-site residue.

The protein belongs to the GHMP kinase family. IspE subfamily.

It carries out the reaction 4-CDP-2-C-methyl-D-erythritol + ATP = 4-CDP-2-C-methyl-D-erythritol 2-phosphate + ADP + H(+). The protein operates within isoprenoid biosynthesis; isopentenyl diphosphate biosynthesis via DXP pathway; isopentenyl diphosphate from 1-deoxy-D-xylulose 5-phosphate: step 3/6. Its function is as follows. Catalyzes the phosphorylation of the position 2 hydroxy group of 4-diphosphocytidyl-2C-methyl-D-erythritol. The protein is 4-diphosphocytidyl-2-C-methyl-D-erythritol kinase of Pseudomonas putida (strain W619).